The sequence spans 483 residues: Zinc metalloproteinase/disintegrin (483 aa).

The signal sequence occupies residues 1 to 20 (MIQVLLVTLCLAAFPYQGNS). The propeptide occupies 21–191 (IILESGNVND…KASQLNLTPE (171 aa)). Positions 198–394 (RYIELVVVAD…HNPQCMLNEP (197 aa)) constitute a Peptidase M12B domain. Residues Glu201 and Asp285 each contribute to the Ca(2+) site. 3 cysteine pairs are disulfide-bonded: Cys309-Cys389, Cys349-Cys373, and Cys351-Cys356. His334 is a Zn(2+) binding site. Glu335 is an active-site residue. Zn(2+) contacts are provided by His338 and His344. Positions 389 and 392 each coordinate Ca(2+). The propeptide occupies 395–414 (LRTDIVSTPVSGNELWETGE). Residues 402–483 (TPVSGNELWE…AGCPRNPFHA (82 aa)) enclose the Disintegrin domain. Intrachain disulfides connect Cys425–Cys448, Cys439–Cys445, Cys444–Cys469, and Cys457–Cys476. The Cell attachment site; atypical (KGD) motif lies at 461–463 (KGD).

Belongs to the venom metalloproteinase (M12B) family. P-II subfamily. P-IIe sub-subfamily. In terms of assembly, heterodimer with piscivostatin-alpha; disulfide-linked (disintegrin). The cofactor is Zn(2+). Expressed by the venom gland.

The protein resides in the secreted. Impairs hemostasis in the envenomed animal. Functionally, inhibits platelet aggregation induced by ADP. Acts by inhibiting fibrinogen interaction with platelet receptors GPIIb/GPIIIa (ITGA2B/ITGB3). Also inhibits platelet aggregate dissociation in human platelet-rich plasma. This chain is Zinc metalloproteinase/disintegrin, found in Agkistrodon piscivorus piscivorus (Eastern cottonmouth).